A 256-amino-acid polypeptide reads, in one-letter code: Protein YIPF7 (256 aa).

Over 1–125 the chain is Cytoplasmic; the sequence is MSNLAQFDSD…VDGSIMNETD (125 aa). Composition is skewed to polar residues over residues 18–31 and 38–48; these read IDNQ…SNAY and RKQQAGEQPQP. Residues 18-48 are disordered; sequence IDNQEQSGNDSNAYGNLYGSRKQQAGEQPQP. Residues 126–146 traverse the membrane as a helical segment; it reads LTGPILFCVALGATLLLAGKV. Residue glutamine 147 is a topological domain, extracellular. Residues 148 to 168 traverse the membrane as a helical segment; it reads FGYVYGMSAIGCLVIHALLNL. The Cytoplasmic portion of the chain corresponds to 169–172; the sequence is MSSS. The helical transmembrane segment at 173-193 threads the bilayer; sequence GVSYGCVASVLGYCLLPMVIL. Residues 194-196 are Extracellular-facing; the sequence is SGC. Residues 197–217 traverse the membrane as a helical segment; sequence AMFFSLQGIFGIMSSLVIIGW. At 218-235 the chain is on the cytoplasmic side; sequence CSLSASKIFIAALHMEGQ. The chain crosses the membrane as a helical span at residues 236–256; sequence QLLVAYPCAILYGLFALLTIF.

This sequence belongs to the YIP1 family.

The protein localises to the endoplasmic reticulum membrane. It localises to the golgi apparatus. Its subcellular location is the cis-Golgi network membrane. The protein resides in the trans-Golgi network membrane. The chain is Protein YIPF7 (YIPF7) from Homo sapiens (Human).